The primary structure comprises 77 residues: Large ribosomal subunit protein bL31 (77 aa).

It belongs to the bacterial ribosomal protein bL31 family. Type A subfamily. In terms of assembly, part of the 50S ribosomal subunit.

In terms of biological role, binds the 23S rRNA. This is Large ribosomal subunit protein bL31 from Microcystis aeruginosa (strain NIES-843 / IAM M-2473).